Here is a 462-residue protein sequence, read N- to C-terminus: Argininosuccinate lyase (462 aa).

The protein belongs to the lyase 1 family. Argininosuccinate lyase subfamily.

The protein localises to the cytoplasm. The enzyme catalyses 2-(N(omega)-L-arginino)succinate = fumarate + L-arginine. It participates in amino-acid biosynthesis; L-arginine biosynthesis; L-arginine from L-ornithine and carbamoyl phosphate: step 3/3. This is Argininosuccinate lyase from Exiguobacterium sp. (strain ATCC BAA-1283 / AT1b).